The primary structure comprises 108 residues: MIVTTTDVIQGAVIDSYLGIVTAEVVYGSNFLRDFLAGIRDVIGGRTGSYERLFEQGQRKAIEELELRAQRLGANAVIGIEIDTGTINVDQSGVLLLITATGTAVRVR.

Belongs to the UPF0145 family.

The protein is UPF0145 protein Ava_0420 of Trichormus variabilis (strain ATCC 29413 / PCC 7937) (Anabaena variabilis).